A 326-amino-acid chain; its full sequence is Vitamin B12 import system permease protein BtuC (326 aa).

The next 9 helical transmembrane spans lie at 15–35 (WLLC…CAGE), 61–81 (LAVL…QALF), 88–108 (PGLL…VLLG), 112–132 (LPNW…TLIL), 146–166 (LLAG…AIYF), 184–204 (GGVD…LLWI), 240–260 (GWMV…GLVI), 274–294 (VLLP…DVVA), and 302–322 (ELPI…WLLL).

Belongs to the binding-protein-dependent transport system permease family. FecCD subfamily. The complex is composed of two ATP-binding proteins (BtuD), two transmembrane proteins (BtuC) and a solute-binding protein (BtuF).

It localises to the cell inner membrane. Part of the ABC transporter complex BtuCDF involved in vitamin B12 import. Involved in the translocation of the substrate across the membrane. This Escherichia coli O8 (strain IAI1) protein is Vitamin B12 import system permease protein BtuC.